Here is a 105-residue protein sequence, read N- to C-terminus: Thiosulfate sulfurtransferase GlpE (105 aa).

In terms of domain architecture, Rhodanese spans 15–103; the sequence is MQQGAILVDI…WCRAELPIDT (89 aa). Cys-63 serves as the catalytic Cysteine persulfide intermediate.

This sequence belongs to the GlpE family.

It localises to the cytoplasm. It catalyses the reaction thiosulfate + hydrogen cyanide = thiocyanate + sulfite + 2 H(+). The enzyme catalyses thiosulfate + [thioredoxin]-dithiol = [thioredoxin]-disulfide + hydrogen sulfide + sulfite + 2 H(+). Transferase that catalyzes the transfer of sulfur from thiosulfate to thiophilic acceptors such as cyanide or dithiols. May function in a CysM-independent thiosulfate assimilation pathway by catalyzing the conversion of thiosulfate to sulfite, which can then be used for L-cysteine biosynthesis. This chain is Thiosulfate sulfurtransferase GlpE, found in Haemophilus influenzae (strain PittEE).